The sequence spans 192 residues: Xanthine phosphoribosyltransferase (192 aa).

2 residues coordinate xanthine: leucine 20 and asparagine 27. 128–132 (ANGDA) lines the 5-phospho-alpha-D-ribose 1-diphosphate pocket. Lysine 156 contributes to the xanthine binding site.

The protein belongs to the purine/pyrimidine phosphoribosyltransferase family. Xpt subfamily. In terms of assembly, homodimer.

The protein resides in the cytoplasm. The enzyme catalyses XMP + diphosphate = xanthine + 5-phospho-alpha-D-ribose 1-diphosphate. It participates in purine metabolism; XMP biosynthesis via salvage pathway; XMP from xanthine: step 1/1. Converts the preformed base xanthine, a product of nucleic acid breakdown, to xanthosine 5'-monophosphate (XMP), so it can be reused for RNA or DNA synthesis. This chain is Xanthine phosphoribosyltransferase, found in Staphylococcus aureus (strain Mu3 / ATCC 700698).